We begin with the raw amino-acid sequence, 172 residues long: Disulfide bond formation protein B (172 aa).

Residues 1-11 (MNPFRWSFRAQ) lie on the Cytoplasmic side of the membrane. The chain crosses the membrane as a helical span at residues 12–28 (FLLGFLACAGLLAYAIY). Over 29 to 46 (VQLHLGLEPCPLCIFQRI) the chain is Periplasmic. An intrachain disulfide couples Cys-38 to Cys-41. The chain crosses the membrane as a helical span at residues 47–63 (AFAALAVFFLIGALHGP). Residues 64 to 70 (RAAGARK) are Cytoplasmic-facing. The chain crosses the membrane as a helical span at residues 71–88 (VYGVLSFIAAGVGMGIGA). The Periplasmic segment spans residues 89-145 (RHVWVQIRPKDMMSSCGPPLSFLSETMGPFEVFRTVLTGTGDCGNIDWRFLGLSMPM). Cysteines 104 and 131 form a disulfide. The helical transmembrane segment at 146-164 (WSMVWFVGLALWALSAGFK) threads the bilayer. Topologically, residues 165-172 (ARRSSLHH) are cytoplasmic.

Belongs to the DsbB family.

The protein localises to the cell inner membrane. Required for disulfide bond formation in some periplasmic proteins. Acts by oxidizing the DsbA protein. This is Disulfide bond formation protein B from Xanthomonas oryzae pv. oryzae (strain MAFF 311018).